Here is a 205-residue protein sequence, read N- to C-terminus: Small ribosomal subunit protein uS3c (205 aa).

Residues 37–106 form the KH type-2 domain; it reads IRQLLRDYVL…TWRISLVEVS (70 aa).

Belongs to the universal ribosomal protein uS3 family. As to quaternary structure, part of the 30S ribosomal subunit.

Its subcellular location is the plastid. The protein resides in the chloroplast. In Cyanidioschyzon merolae (strain NIES-3377 / 10D) (Unicellular red alga), this protein is Small ribosomal subunit protein uS3c (rps3).